The following is a 469-amino-acid chain: Endoplasmic reticulum oxidoreductin-1 (469 aa).

A signal peptide spans 1 to 36 (MGKGAIKEEESEKKRKTWRWPLATLVVVFLAVAVSS). 6 disulfides stabilise this stretch: C52–C71, C54–C69, C108–C372, C117–C122, C222–C231, and C375–C378. FAD contacts are provided by R201, T203, and W214. FAD contacts are provided by S242, H245, R275, and R282. Residue N365 is glycosylated (N-linked (GlcNAc...) asparagine).

The protein belongs to the EROs family. As to quaternary structure, may function both as a monomer and a homodimer. FAD serves as cofactor. N-glycosylated.

It is found in the endoplasmic reticulum membrane. Its function is as follows. Essential oxidoreductase that oxidizes proteins in the endoplasmic reticulum to produce disulfide bonds. Acts by oxidizing directly PDI isomerase through a direct disulfide exchange. Does not act as a direct oxidant of folding substrate, but relies on PDI to transfer oxidizing equivalent. Does not oxidize all PDI related proteins, suggesting that it can discriminate between PDI and related proteins. Its reoxidation probably involves electron transfer to molecular oxygen via FAD. Acts independently of glutathione. May be responsible for a significant proportion of reactive oxygen species (ROS) in the cell, thereby being a source of oxidative stress. This is Endoplasmic reticulum oxidoreductin-1 (AERO1) from Arabidopsis thaliana (Mouse-ear cress).